The chain runs to 273 residues: MALNSINTNSGALIALQNLNTTSSELNNVQQRISTGKKIGSAKDNGAIWATAKNQSATANSINAVKDSLQRGQSTIDVALAAGDTITDLLGKMKEKALAASDTSLSTASFNALKADFDSLRDQVTKAATNAKFNGVSIADGTTTKLSFLANSDGSAFTVTAKTLTLGGLGLTTTSSFTTAAAAKTMIGTIDTALQTATNKLASLGTSSTGLDTHLTFVGKLQDSLDAGVGNLMDADLAKESARLQSLQTKQQLGVQALSIANSSSSAILSLFR.

The protein belongs to the bacterial flagellin family. As to quaternary structure, in C.crescentus, the flagellar filament is composed of multiple flagellins of 29 kDa; 27 kDa and 25 kDa.

Its subcellular location is the secreted. It is found in the bacterial flagellum. Its function is as follows. Flagellin is the subunit protein which polymerizes to form the filaments of bacterial flagella. In Caulobacter vibrioides (strain ATCC 19089 / CIP 103742 / CB 15) (Caulobacter crescentus), this protein is Flagellin FljO (fljO).